The chain runs to 181 residues: Coatomer subunit zeta-3 (181 aa).

This sequence belongs to the adaptor complexes small subunit family. In terms of assembly, oligomeric complex that consists of at least the alpha, beta, beta', gamma, delta, epsilon and zeta subunits.

The protein resides in the cytoplasm. It is found in the golgi apparatus membrane. The protein localises to the cytoplasmic vesicle. It localises to the COPI-coated vesicle membrane. Functionally, the coatomer is a cytosolic protein complex that binds to dilysine motifs and reversibly associates with Golgi non-clathrin-coated vesicles, which further mediate biosynthetic protein transport from the ER, via the Golgi up to the trans Golgi network. Coatomer complex is required for budding from Golgi membranes, and is essential for the retrograde Golgi-to-ER transport of dilysine-tagged proteins. The zeta subunit may be involved in regulating the coat assembly and, hence, the rate of biosynthetic protein transport due to its association-dissociation properties with the coatomer complex. The polypeptide is Coatomer subunit zeta-3 (Arabidopsis thaliana (Mouse-ear cress)).